The chain runs to 435 residues: 5-methylthioadenosine/S-adenosylhomocysteine deaminase (435 aa).

The Zn(2+) site is built by His65 and His67. Residues Glu94, Arg150, and His189 each contribute to the substrate site. A Zn(2+)-binding site is contributed by His216. Substrate-binding residues include Glu219 and Asp304. Asp304 provides a ligand contact to Zn(2+).

Belongs to the metallo-dependent hydrolases superfamily. MTA/SAH deaminase family. It depends on Zn(2+) as a cofactor.

The enzyme catalyses S-adenosyl-L-homocysteine + H2O + H(+) = S-inosyl-L-homocysteine + NH4(+). It catalyses the reaction S-methyl-5'-thioadenosine + H2O + H(+) = S-methyl-5'-thioinosine + NH4(+). Functionally, catalyzes the deamination of 5-methylthioadenosine and S-adenosyl-L-homocysteine into 5-methylthioinosine and S-inosyl-L-homocysteine, respectively. Is also able to deaminate adenosine. This Bacillus cytotoxicus (strain DSM 22905 / CIP 110041 / 391-98 / NVH 391-98) protein is 5-methylthioadenosine/S-adenosylhomocysteine deaminase.